The sequence spans 493 residues: GTPase Der (493 aa).

Residues 3–166 (PVIALVGRPN…EALGIFPKDN (164 aa)) form the EngA-type G 1 domain. GTP contacts are provided by residues 9–16 (GRPNVGKS), 56–60 (DTGGI), and 118–121 (NKVD). Residues 166-195 (NAEEEGEGEPASEEVAEGEEPTRIPGPSEK) form a disordered region. Residues 167-184 (AEEEGEGEPASEEVAEGE) show a composition bias toward acidic residues. The EngA-type G 2 domain occupies 198 to 371 (IKIAIIGRPN…SVQESFRSAV (174 aa)). GTP contacts are provided by residues 204 to 211 (GRPNVGKS), 251 to 255 (DTAGV), and 316 to 319 (NKWD). One can recognise a KH-like domain in the interval 372–456 (TRWPTSRLTS…PIRIEYKGGE (85 aa)). Over residues 454–463 (GGENPYEGKK) the composition is skewed to basic and acidic residues. The interval 454-493 (GGENPYEGKKNSLTARQVNKKRRLMSHHKKAEKKKKDKRR) is disordered. Over residues 471–493 (VNKKRRLMSHHKKAEKKKKDKRR) the composition is skewed to basic residues.

The protein belongs to the TRAFAC class TrmE-Era-EngA-EngB-Septin-like GTPase superfamily. EngA (Der) GTPase family. In terms of assembly, associates with the 50S ribosomal subunit.

Its function is as follows. GTPase that plays an essential role in the late steps of ribosome biogenesis. The protein is GTPase Der of Pseudomonas aeruginosa (strain ATCC 15692 / DSM 22644 / CIP 104116 / JCM 14847 / LMG 12228 / 1C / PRS 101 / PAO1).